We begin with the raw amino-acid sequence, 276 residues long: N-acyl homoserine lactonase AiiB (276 aa).

The Zn(2+) site is built by H111, H113, H116, H191, D213, and H259.

The protein belongs to the metallo-beta-lactamase superfamily. Zn(2+) serves as cofactor.

It carries out the reaction an N-acyl-L-homoserine lactone + H2O = an N-acyl-L-homoserine + H(+). In Agrobacterium fabrum (strain C58 / ATCC 33970) (Agrobacterium tumefaciens (strain C58)), this protein is N-acyl homoserine lactonase AiiB.